The following is a 391-amino-acid chain: Processive diacylglycerol beta-glucosyltransferase (391 aa).

It belongs to the glycosyltransferase 28 family. UgtP subfamily.

The protein resides in the cell membrane. It catalyses the reaction a 1,2-diacyl-3-O-(beta-D-glucopyranosyl)-sn-glycerol + UDP-alpha-D-glucose = a 1,2-diacyl-3-O-(beta-D-Glc-(1-&gt;6)-beta-D-Glc)-sn-glycerol + UDP + H(+). The enzyme catalyses a 1,2-diacyl-sn-glycerol + UDP-alpha-D-glucose = a 1,2-diacyl-3-O-(beta-D-glucopyranosyl)-sn-glycerol + UDP + H(+). The protein operates within glycolipid metabolism; diglucosyl-diacylglycerol biosynthesis. Its function is as follows. Processive glucosyltransferase involved in the biosynthesis of both the bilayer- and non-bilayer-forming membrane glucolipids. Is able to successively transfer two glucosyl residues to diacylglycerol (DAG), thereby catalyzing the formation of beta-monoglucosyl-DAG (3-O-(beta-D-glucopyranosyl)-1,2-diacyl-sn-glycerol) and beta-diglucosyl-DAG (3-O-(beta-D-glucopyranosyl-beta-(1-&gt;6)-D-glucopyranosyl)-1,2-diacyl-sn-glycerol). Beta-diglucosyl-DAG is the predominant glycolipid found in Bacillales and is also used as a membrane anchor for lipoteichoic acid (LTA). The protein is Processive diacylglycerol beta-glucosyltransferase of Staphylococcus carnosus (strain TM300).